Here is a 355-residue protein sequence, read N- to C-terminus: S-adenosylmethionine:tRNA ribosyltransferase-isomerase (355 aa).

It belongs to the QueA family. Monomer.

The protein resides in the cytoplasm. The catalysed reaction is 7-aminomethyl-7-carbaguanosine(34) in tRNA + S-adenosyl-L-methionine = epoxyqueuosine(34) in tRNA + adenine + L-methionine + 2 H(+). Its pathway is tRNA modification; tRNA-queuosine biosynthesis. Functionally, transfers and isomerizes the ribose moiety from AdoMet to the 7-aminomethyl group of 7-deazaguanine (preQ1-tRNA) to give epoxyqueuosine (oQ-tRNA). This Burkholderia cenocepacia (strain ATCC BAA-245 / DSM 16553 / LMG 16656 / NCTC 13227 / J2315 / CF5610) (Burkholderia cepacia (strain J2315)) protein is S-adenosylmethionine:tRNA ribosyltransferase-isomerase.